Reading from the N-terminus, the 115-residue chain is Photosystem II reaction center Psb28 protein (115 aa).

It belongs to the Psb28 family. Part of the photosystem II complex.

The protein localises to the plastid. Its subcellular location is the chloroplast thylakoid membrane. The polypeptide is Photosystem II reaction center Psb28 protein (Phaeodactylum tricornutum (strain CCAP 1055/1)).